The sequence spans 384 residues: Actin-related protein 2/3 complex subunit 1 (384 aa).

WD repeat units follow at residues 61–99 (DHDK…TYKP), 105–146 (RINR…WVSK), 151–190 (PIKS…LDSK), 212–251 (YQGS…QSVN), and 349–383 (AHEN…VIYT).

The protein belongs to the WD repeat ARPC1 family. Component of the Arp2/3 complex composed of ARP2, ARP3, ARC40/p41-ARC, ARC35/p34-ARC, ARC18/p21-ARC, ARC19/p20-ARC and ARC16/p16-ARC.

The protein resides in the cytoplasm. The protein localises to the cytoskeleton. It localises to the actin patch. In terms of biological role, functions as a component of the Arp2/3 complex which is involved in regulation of actin polymerization and together with an activating nucleation-promoting factor (NPF) mediates the formation of branched actin networks. The chain is Actin-related protein 2/3 complex subunit 1 (ARC40) from Saccharomyces cerevisiae (strain ATCC 204508 / S288c) (Baker's yeast).